Here is a 522-residue protein sequence, read N- to C-terminus: F-box only protein 7 (522 aa).

The ubiquitin-like stretch occupies residues 1–88 (MRLRVRLLKR…QDDIPAPNIP (88 aa)). The tract at residues 85–144 (PNIPSSTDSEHSSLQNNEQPSLATSSNQTSMQDEQPSDSFQGQAAQSGVWNDDSMLGPSQ) is disordered. Polar residues predominate over residues 87–133 (IPSSTDSEHSSLQNNEQPSLATSSNQTSMQDEQPSDSFQGQAAQSGV). The tract at residues 92 to 129 (DSEHSSLQNNEQPSLATSSNQTSMQDEQPSDSFQGQAA) is important for interaction with PINK1. Positions 129-169 (AQSGVWNDDSMLGPSQNFEAESIQDNAHMAEGTGFYPSEPM) are important for interaction with CDK6. Residues 180 to 324 (PHSLETLYQS…PLLAFTRQAL (145 aa)) form an important for dimerization and interaction with PSMF1 region. Positions 329–375 (VFGLVVLPLELKLRIFRLLDVRSVLSLSAVCRDLFTASNDPLLWRFL) constitute an F-box domain. Positions 381 to 522 (RDNTVRVQDT…RPTDGRLSFM (142 aa)) are important for interaction with CDK6. Residues Arg432 and Arg451 each carry the omega-N-methylarginine modification. The short motif at 481 to 484 (RFDP) is the RFDP motif element. The interval 483-522 (DPVGPLPGPNPILPGRGGPNDRFPFRPSRGRPTDGRLSFM) is disordered. An Asymmetric dimethylarginine modification is found at Arg518.

As to quaternary structure, part of the SCF (SKP1-CUL1-F-box) E3 ubiquitin-protein ligase complex SCF(FBXO7) formed of CUL1, SKP1, RBX1 and FBXO7. Interacts via its C-terminal proline-rich region with DLGAP5. Interacts with BIRC2. Interacts with CDK6 and promotes its interaction with D-type cyclin. Interacts with PSMF1. Interacts (via the N-terminal Ubl domain) with PRKN. Interact (via N-terminal region) with PINK1. In terms of assembly, interact (via N-terminal region) with PINK1.

The protein localises to the cytoplasm. It localises to the nucleus. The protein resides in the mitochondrion. Its subcellular location is the cytosol. Its pathway is protein modification; protein ubiquitination. In terms of biological role, substrate recognition component of a SCF (SKP1-CUL1-F-box protein) E3 ubiquitin-protein ligase complex which mediates the ubiquitination and subsequent proteasomal degradation of target proteins and plays a role in several biological processes such as cell cycle, cell proliferation, or maintenance of chromosome stability. Recognizes and ubiquitinates BIRC2 and the cell cycle regulator DLGAP5. Plays a role downstream of PINK1 in the clearance of damaged mitochondria via selective autophagy (mitophagy) by targeting PRKN to dysfunctional depolarized mitochondria. Promotes MFN1 ubiquitination. Mediates the ubiquitination and proteasomal degradation of UXT isoform 2, thereby impairing the NF-kappa-B signaling pathway. Inhibits NF-kappa-B pathway also by promoting the ubiquitination of TRAF2. Affects the assembly state and activity of the proteasome in the cells including neurons by ubiquitinating the proteasomal subunit PSMA2 via 'Lys-63'-linked polyubiquitin chains. Promotes 'Lys-48'-linked polyubiquitination SIRT7, leading to the hydrogen peroxide-induced cell death. The sequence is that of F-box only protein 7 (FBXO7) from Homo sapiens (Human).